A 305-amino-acid chain; its full sequence is Protoheme IX farnesyltransferase 2 (305 aa).

8 consecutive transmembrane segments (helical) span residues 38-58, 60-80, 115-135, 157-177, 181-201, 227-247, 249-269, and 285-305; these read LITT…SFLG, INTV…SCAI, ILLV…AAVI, INTV…WTAV, IGVV…PHFL, VTKR…FFLG, LGLP…ILGL, and FVYS…LTLF.

Belongs to the UbiA prenyltransferase family. Protoheme IX farnesyltransferase subfamily. As to quaternary structure, interacts with CtaA.

It is found in the cell membrane. The catalysed reaction is heme b + (2E,6E)-farnesyl diphosphate + H2O = Fe(II)-heme o + diphosphate. It functions in the pathway porphyrin-containing compound metabolism; heme O biosynthesis; heme O from protoheme: step 1/1. Its function is as follows. Converts heme B (protoheme IX) to heme O by substitution of the vinyl group on carbon 2 of heme B porphyrin ring with a hydroxyethyl farnesyl side group. This chain is Protoheme IX farnesyltransferase 2 (ctaB2), found in Bacillus subtilis (strain 168).